The primary structure comprises 280 residues: Meiotic driver wtf35 (280 aa).

Basic and acidic residues predominate over residues 1-29 (MKNKDYPLRTSMDELSTKNDNEIDLEKGP). Disordered stretches follow at residues 1–49 (MKNK…DLNN) and 64–100 (NKST…GTTD). 4 consecutive transmembrane segments (helical) span residues 105–125 (FLIK…PAVC), 142–162 (WTLI…SWYF), 184–204 (IPMA…PRVA), and 218–238 (SLAD…VETV).

It belongs to the WTF family. Homomer. Forms protein aggregates. The two isoforms can interact with each other and with themselves. High sequence similarity is required for their interaction.

It is found in the spore membrane. Its subcellular location is the vacuole membrane. The protein localises to the ascus epiplasm. The protein resides in the cytoplasm. It localises to the endoplasmic reticulum membrane. Functionally, promotes unequal transmission of alleles from the parental zygote to progeny spores by acting as poison/antidote system where the poison and antidote proteins are produced from the same locus; the poison component is trans-acting and targets all spores within an ascus whereas the antidote component is spore-specific, leading to poisoning of all progeny that do not inherit the allele. In terms of biological role, localizes isoform 2 to the vacuole thereby facilitating its degradation. Forms toxic aggregates that disrupt spore maturation. This is Meiotic driver wtf35 from Schizosaccharomyces pombe (Fission yeast).